We begin with the raw amino-acid sequence, 206 residues long: Translation initiation factor IF-3 (206 aa).

This sequence belongs to the IF-3 family. In terms of assembly, monomer.

The protein localises to the cytoplasm. Functionally, IF-3 binds to the 30S ribosomal subunit and shifts the equilibrium between 70S ribosomes and their 50S and 30S subunits in favor of the free subunits, thus enhancing the availability of 30S subunits on which protein synthesis initiation begins. The polypeptide is Translation initiation factor IF-3 (Shigella flexneri).